We begin with the raw amino-acid sequence, 150 residues long: UPF0098 protein TC_0109 (150 aa).

Belongs to the UPF0098 family.

This chain is UPF0098 protein TC_0109, found in Chlamydia muridarum (strain MoPn / Nigg).